Here is a 148-residue protein sequence, read N- to C-terminus: D-aminoacyl-tRNA deacylase (148 aa).

Positions 136–137 (GP) match the Gly-cisPro motif, important for rejection of L-amino acids motif.

Belongs to the DTD family. In terms of assembly, homodimer.

It localises to the cytoplasm. It carries out the reaction glycyl-tRNA(Ala) + H2O = tRNA(Ala) + glycine + H(+). The enzyme catalyses a D-aminoacyl-tRNA + H2O = a tRNA + a D-alpha-amino acid + H(+). Functionally, an aminoacyl-tRNA editing enzyme that deacylates mischarged D-aminoacyl-tRNAs. Also deacylates mischarged glycyl-tRNA(Ala), protecting cells against glycine mischarging by AlaRS. Acts via tRNA-based rather than protein-based catalysis; rejects L-amino acids rather than detecting D-amino acids in the active site. By recycling D-aminoacyl-tRNA to D-amino acids and free tRNA molecules, this enzyme counteracts the toxicity associated with the formation of D-aminoacyl-tRNA entities in vivo and helps enforce protein L-homochirality. The sequence is that of D-aminoacyl-tRNA deacylase from Streptococcus mutans serotype c (strain ATCC 700610 / UA159).